Here is a 272-residue protein sequence, read N- to C-terminus: Putative pyruvate, phosphate dikinase regulatory protein (272 aa).

154–161 (GVSRTSKS) contributes to the ADP binding site.

The protein belongs to the pyruvate, phosphate/water dikinase regulatory protein family. PDRP subfamily.

The enzyme catalyses N(tele)-phospho-L-histidyl/L-threonyl-[pyruvate, phosphate dikinase] + ADP = N(tele)-phospho-L-histidyl/O-phospho-L-threonyl-[pyruvate, phosphate dikinase] + AMP + H(+). The catalysed reaction is N(tele)-phospho-L-histidyl/O-phospho-L-threonyl-[pyruvate, phosphate dikinase] + phosphate + H(+) = N(tele)-phospho-L-histidyl/L-threonyl-[pyruvate, phosphate dikinase] + diphosphate. Bifunctional serine/threonine kinase and phosphorylase involved in the regulation of the pyruvate, phosphate dikinase (PPDK) by catalyzing its phosphorylation/dephosphorylation. The chain is Putative pyruvate, phosphate dikinase regulatory protein from Wolbachia sp. subsp. Brugia malayi (strain TRS).